Here is a 75-residue protein sequence, read N- to C-terminus: Small ribosomal subunit protein bS21 (75 aa).

The segment at 52-75 is disordered; sequence RRARKLARKRAQREGLIGGRPGAR. Positions 53–62 are enriched in basic residues; the sequence is RARKLARKRA.

Belongs to the bacterial ribosomal protein bS21 family.

The polypeptide is Small ribosomal subunit protein bS21 (Brucella anthropi (strain ATCC 49188 / DSM 6882 / CCUG 24695 / JCM 21032 / LMG 3331 / NBRC 15819 / NCTC 12168 / Alc 37) (Ochrobactrum anthropi)).